Consider the following 132-residue polypeptide: Sodium/calcium exchanger regulatory protein 1 (132 aa).

(9Z)-hexadecenoate contacts are provided by Arg126 and Tyr128.

This sequence belongs to the calycin superfamily. Fatty-acid binding protein (FABP) family. Interacts with Na(+)/Ca(2+) exchanger NCXSQ1; ReP1-NCXSQ phosphorylation does not affect the interaction. Post-translationally, phosphorylated. Phosphorylation may result in the release of the bound fatty acid. Expressed in the optic nerve (at protein level).

It is found in the cytoplasm. The protein resides in the membrane. Functionally, binds and may transport fatty acids such as palmitoleate. Also binds poly-phosphoinositides including phosphatidylinositol 4-phosphate (PtdIns(4)P), phosphatidylinositol 4,5-bisphosphate (PtdIns(4,5)P2) and phosphatidylinositol 3,4,5-trisphosphate (PtdIns(3,4,5)P3), and phosphatidic acid. When phosphorylated, stimulates the activity of optic nerve Na(+)/Ca(2+) exchanger. This chain is Sodium/calcium exchanger regulatory protein 1, found in Doryteuthis pealeii (Longfin inshore squid).